Here is a 504-residue protein sequence, read N- to C-terminus: Splicing factor SF3a60 homolog (504 aa).

S2 bears the N-acetylserine mark. Disordered stretches follow at residues 293–319 (DKKH…SENA) and 355–374 (YEEM…LESD). Residues 356–374 (EEMEGEREGEEANTELESD) are compositionally biased toward acidic residues. Position 373 is a phosphoserine (S373). The Matrin-type zinc finger occupies 409-440 (FKCEICGNYSYWGRRAFERHFKEWRHQHGMRC).

This sequence belongs to the SF3A3 family. In terms of tissue distribution, expressed at moderate levels in all sporophytic tissues with strongest expression in gametophytes.

It localises to the nucleus. Splicing factor homolog to SF3a60 that may be involved in pre-spliceosome formation. Is necessary for gametic cell fate determination. The polypeptide is Splicing factor SF3a60 homolog (Arabidopsis thaliana (Mouse-ear cress)).